The sequence spans 129 residues: Succinate dehydrogenase assembly factor 3, mitochondrial (129 aa).

The N-terminal 21 residues, 1 to 21 (MQVNHLLRQAVKQTTRAGRLG), are a transit peptide targeting the mitochondrion.

Belongs to the complex I LYR family. SDHAF3 subfamily. Interacts with the iron-sulfur protein subunit within the SDH catalytic dimer.

The protein localises to the mitochondrion matrix. Plays an essential role in the assembly of succinate dehydrogenase (SDH), an enzyme complex (also referred to as respiratory complex II) that is a component of both the tricarboxylic acid (TCA) cycle and the mitochondrial electron transport chain, and which couples the oxidation of succinate to fumarate with the reduction of ubiquinone (coenzyme Q) to ubiquinol. Promotes maturation of the iron-sulfur protein subunit of the SDH catalytic dimer, protecting it from the deleterious effects of oxidants. May act together with SDHAF1. This Kluyveromyces lactis (strain ATCC 8585 / CBS 2359 / DSM 70799 / NBRC 1267 / NRRL Y-1140 / WM37) (Yeast) protein is Succinate dehydrogenase assembly factor 3, mitochondrial.